We begin with the raw amino-acid sequence, 125 residues long: uncharacterized protein (125 aa).

The protein localises to the plastid. This is an uncharacterized protein from Euglena longa (Euglenophycean alga).